We begin with the raw amino-acid sequence, 644 residues long: N-acetylgalactosaminyltransferase 4 (644 aa).

Topologically, residues 1–13 are cytoplasmic; it reads MAIKKRYVKRLLR. The chain crosses the membrane as a helical; Signal-anchor for type II membrane protein span at residues 14–34; it reads KVVLLLVVIVTVSLVTTLVVE. Residues 35 to 644 are Lumenal-facing; the sequence is RRMKNAAELT…MLDTFYDGLK (610 aa). N-linked (GlcNAc...) asparagine glycans are attached at residues Asn157 and Asn179. The interval 177 to 288 is catalytic subdomain A; the sequence is LPNISVIFIF…YNWLPPLIEP (112 aa). Substrate-binding residues include Asp218 and Arg249. Asp272 is a binding site for Mn(2+). Ser273 contacts substrate. His274 provides a ligand contact to Mn(2+). Positions 345-407 are catalytic subdomain B; it reads PYRSPVMMGG…PCSRVAHIFR (63 aa). Trp376 lines the substrate pocket. Mn(2+) is bound at residue His404. Arg407 serves as a coordination point for substrate. One can recognise a Ricin B-type lectin domain in the interval 496-629; that stretch reads AAGIIQNVAN…GNDRQRWEFG (134 aa). Cys509 and Cys526 form a disulfide bridge. Asn529 and Asn565 each carry an N-linked (GlcNAc...) asparagine glycan. 2 disulfides stabilise this stretch: Cys556-Cys573 and Cys600-Cys617. An N-linked (GlcNAc...) asparagine glycan is attached at Asn632.

It belongs to the glycosyltransferase 2 family. GalNAc-T subfamily. It depends on Mn(2+) as a cofactor. As to expression, expressed in developing oocytes and egg chambers. During embryonic stages 9-11, expressed in the primordium of the foregut, midgut and hindgut. During embryonic stages 12-13, shows specific expression in the proventriculus that continues until the end of embryogenesis. In third instar larvae, ubiquitously expressed in wing, eye-antennal, leg and haltere imaginal disks.

The protein resides in the golgi apparatus membrane. It catalyses the reaction L-seryl-[protein] + UDP-N-acetyl-alpha-D-galactosamine = a 3-O-[N-acetyl-alpha-D-galactosaminyl]-L-seryl-[protein] + UDP + H(+). The enzyme catalyses L-threonyl-[protein] + UDP-N-acetyl-alpha-D-galactosamine = a 3-O-[N-acetyl-alpha-D-galactosaminyl]-L-threonyl-[protein] + UDP + H(+). Its pathway is protein modification; protein glycosylation. Functionally, glycopeptide transferase involved in O-linked oligosaccharide biosynthesis, which catalyzes the transfer of an N-acetyl-D-galactosamine residue to an already glycosylated peptide. In contrast to other proteins of the family, it does not act as a peptide transferase that transfers GalNAc onto serine or threonine residue on the protein receptor, but instead requires the prior addition of a GalNAc on a peptide before adding additional GalNAc moieties. Some peptide transferase activity is however not excluded, considering that its appropriate peptide substrate may remain unidentified. Prefers the diglycosylated Muc5AC-3/13 as substrate. The protein is N-acetylgalactosaminyltransferase 4 of Drosophila melanogaster (Fruit fly).